The primary structure comprises 205 residues: Large ribosomal subunit protein uL4 (205 aa).

This sequence belongs to the universal ribosomal protein uL4 family. As to quaternary structure, part of the 50S ribosomal subunit.

Its function is as follows. One of the primary rRNA binding proteins, this protein initially binds near the 5'-end of the 23S rRNA. It is important during the early stages of 50S assembly. It makes multiple contacts with different domains of the 23S rRNA in the assembled 50S subunit and ribosome. Forms part of the polypeptide exit tunnel. The protein is Large ribosomal subunit protein uL4 of Roseobacter denitrificans (strain ATCC 33942 / OCh 114) (Erythrobacter sp. (strain OCh 114)).